The following is a 421-amino-acid chain: UDP-N-acetylglucosamine 1-carboxyvinyltransferase (421 aa).

Residue 22-23 (KN) participates in phosphoenolpyruvate binding. UDP-N-acetyl-alpha-D-glucosamine is bound at residue Arg93. The Proton donor role is filled by Cys117. Residue Cys117 is modified to 2-(S-cysteinyl)pyruvic acid O-phosphothioketal. UDP-N-acetyl-alpha-D-glucosamine-binding positions include 122 to 126 (RPVDL), Asp308, and Ile330.

It belongs to the EPSP synthase family. MurA subfamily.

It is found in the cytoplasm. It carries out the reaction phosphoenolpyruvate + UDP-N-acetyl-alpha-D-glucosamine = UDP-N-acetyl-3-O-(1-carboxyvinyl)-alpha-D-glucosamine + phosphate. Its pathway is cell wall biogenesis; peptidoglycan biosynthesis. Cell wall formation. Adds enolpyruvyl to UDP-N-acetylglucosamine. The sequence is that of UDP-N-acetylglucosamine 1-carboxyvinyltransferase from Pseudomonas fluorescens (strain ATCC BAA-477 / NRRL B-23932 / Pf-5).